The primary structure comprises 478 residues: MNENDENGPSTRLTRAKAAALTTDAPAANGALKKPLQTKKAATGANGTQRKRAALGDVSNVGKADNGETKDAKKATSKTGLTSKATMQSGGVQKLSRSNLSRTAVGAKDNNVKKPATEAKRPGSGSGMGSAMKRTSSQKSLQEKTIQQEEPPRKKVDIEKVVEKQAEAVSVKGDVKAGAQTEELEKPQDFVADLDTEDLDDPLMAAEYVVEIFDYLRELEMETLPNPDYIDHQPDLEWKMRGILVDWLIEVHTRFRLLPETLFLAVNIIDRFLSAEVVALDRLQLVGVAAMFIASKYEEVLSPHVANFSHVADETFSDKEILDAERHILATLEYNMSYPNPMNFLRRISKADNYDIQTRTLGKYLMEISLLDHRFLGYPQSQIGAAAMYLARLILDRGPWDATLAHYAGYTEEEIDEVFRLMVDYLHRPVCHEAFFKKYASKKFLKASIMTRQWAKKYHHLYIDSALTEPYNSIKDNE.

Residues 1-153 are disordered; sequence MNENDENGPS…KTIQQEEPPR (153 aa). Residues 16–31 show a composition bias toward low complexity; that stretch reads AKAAALTTDAPAANGA. Basic and acidic residues predominate over residues 65–74; the sequence is DNGETKDAKK. The span at 77 to 102 shows a compositional bias: polar residues; that stretch reads SKTGLTSKATMQSGGVQKLSRSNLSR. Basic and acidic residues predominate over residues 110 to 121; it reads NNVKKPATEAKR. A compositionally biased stretch (polar residues) spans 133–145; it reads KRTSSQKSLQEKT.

This sequence belongs to the cyclin family. Cyclin AB subfamily.

Functionally, essential for the control of the cell cycle at the G2/M (mitosis) transition. Interacts with the CDC2 protein kinase to form MPF. G2/M cyclins accumulate steadily during G2 and are abruptly destroyed at mitosis. The protein is G2/mitotic-specific cyclin-B (nimE) of Emericella nidulans (strain FGSC A4 / ATCC 38163 / CBS 112.46 / NRRL 194 / M139) (Aspergillus nidulans).